A 110-amino-acid polypeptide reads, in one-letter code: B3 domain-containing protein LOC_Os02g10420 (110 aa).

The segment at residues 1 to 104 (MSAMLNENVP…VLSVTVHKAD (104 aa)) is a DNA-binding region (TF-B3).

It localises to the nucleus. In Oryza sativa subsp. japonica (Rice), this protein is B3 domain-containing protein LOC_Os02g10420.